The following is a 597-amino-acid chain: Adenine deaminase (597 aa).

This sequence belongs to the metallo-dependent hydrolases superfamily. Adenine deaminase family. It depends on Mn(2+) as a cofactor.

It carries out the reaction adenine + H2O + H(+) = hypoxanthine + NH4(+). This chain is Adenine deaminase, found in Paracoccus denitrificans (strain Pd 1222).